A 427-amino-acid chain; its full sequence is Enolase (427 aa).

A (2R)-2-phosphoglycerate-binding site is contributed by glutamine 163. The active-site Proton donor is glutamate 205. 3 residues coordinate Mg(2+): aspartate 242, glutamate 283, and aspartate 310. (2R)-2-phosphoglycerate-binding residues include lysine 335, arginine 364, serine 365, and lysine 386. Lysine 335 functions as the Proton acceptor in the catalytic mechanism.

It belongs to the enolase family. Mg(2+) is required as a cofactor.

The protein resides in the cytoplasm. It localises to the secreted. It is found in the cell surface. The catalysed reaction is (2R)-2-phosphoglycerate = phosphoenolpyruvate + H2O. Its pathway is carbohydrate degradation; glycolysis; pyruvate from D-glyceraldehyde 3-phosphate: step 4/5. Its function is as follows. Catalyzes the reversible conversion of 2-phosphoglycerate (2-PG) into phosphoenolpyruvate (PEP). It is essential for the degradation of carbohydrates via glycolysis. This chain is Enolase, found in Salinispora arenicola (strain CNS-205).